A 420-amino-acid polypeptide reads, in one-letter code: Serine--tRNA ligase (420 aa).

227–229 (TSE) lines the L-serine pocket. Residues 258-260 (RRE) and valine 274 each bind ATP. Glutamate 281 contributes to the L-serine binding site. 345–348 (EVTS) provides a ligand contact to ATP. An L-serine-binding site is contributed by threonine 379.

Belongs to the class-II aminoacyl-tRNA synthetase family. Type-1 seryl-tRNA synthetase subfamily. Homodimer. The tRNA molecule binds across the dimer.

It is found in the cytoplasm. It catalyses the reaction tRNA(Ser) + L-serine + ATP = L-seryl-tRNA(Ser) + AMP + diphosphate + H(+). The enzyme catalyses tRNA(Sec) + L-serine + ATP = L-seryl-tRNA(Sec) + AMP + diphosphate + H(+). Its pathway is aminoacyl-tRNA biosynthesis; selenocysteinyl-tRNA(Sec) biosynthesis; L-seryl-tRNA(Sec) from L-serine and tRNA(Sec): step 1/1. In terms of biological role, catalyzes the attachment of serine to tRNA(Ser). Is also able to aminoacylate tRNA(Sec) with serine, to form the misacylated tRNA L-seryl-tRNA(Sec), which will be further converted into selenocysteinyl-tRNA(Sec). The polypeptide is Serine--tRNA ligase (Acidothermus cellulolyticus (strain ATCC 43068 / DSM 8971 / 11B)).